The chain runs to 231 residues: Biosynthetic peptidoglycan transglycosylase (231 aa).

A helical transmembrane segment spans residues Leu7–Phe27.

The protein belongs to the glycosyltransferase 51 family.

The protein resides in the cell inner membrane. It carries out the reaction [GlcNAc-(1-&gt;4)-Mur2Ac(oyl-L-Ala-gamma-D-Glu-L-Lys-D-Ala-D-Ala)](n)-di-trans,octa-cis-undecaprenyl diphosphate + beta-D-GlcNAc-(1-&gt;4)-Mur2Ac(oyl-L-Ala-gamma-D-Glu-L-Lys-D-Ala-D-Ala)-di-trans,octa-cis-undecaprenyl diphosphate = [GlcNAc-(1-&gt;4)-Mur2Ac(oyl-L-Ala-gamma-D-Glu-L-Lys-D-Ala-D-Ala)](n+1)-di-trans,octa-cis-undecaprenyl diphosphate + di-trans,octa-cis-undecaprenyl diphosphate + H(+). It participates in cell wall biogenesis; peptidoglycan biosynthesis. Its function is as follows. Peptidoglycan polymerase that catalyzes glycan chain elongation from lipid-linked precursors. The polypeptide is Biosynthetic peptidoglycan transglycosylase (Janthinobacterium sp. (strain Marseille) (Minibacterium massiliensis)).